A 393-amino-acid polypeptide reads, in one-letter code: Protein TsgA (393 aa).

12 consecutive transmembrane segments (helical) span residues 11–31, 51–71, 78–98, 101–121, 134–154, 162–182, 206–226, 245–265, 273–293, 297–317, 332–352, and 361–381; these read WISF…GMVM, FLNA…EIVP, FGFL…SLAL, AAMF…TFLI, LLFT…IAAF, WYWV…LTFG, IGVL…LGFI, TLVS…SFIL, ILTV…TGTP, AWSI…IITL, FVLT…GPIV, and LLTA…LGFV.

It belongs to the major facilitator superfamily. TsgA family.

It localises to the cell inner membrane. The chain is Protein TsgA from Escherichia coli O7:K1 (strain IAI39 / ExPEC).